The sequence spans 214 residues: Stringent starvation protein A homolog (214 aa).

One can recognise a GST N-terminal domain in the interval 9–87 (SVMSLFSDKN…YLDERFPHPP (79 aa)). The region spanning 92-209 (YPVLRGKSRL…SIGGSAPKHL (118 aa)) is the GST C-terminal domain.

The protein belongs to the GST superfamily. HSP26 family.

In terms of biological role, forms an equimolar complex with the RNA polymerase holoenzyme (RNAP) but not with the core enzyme. In Haemophilus ducreyi (strain 35000HP / ATCC 700724), this protein is Stringent starvation protein A homolog (sspA).